Consider the following 960-residue polypeptide: Isoleucine--tRNA ligase (960 aa).

Positions 60 to 70 match the 'HIGH' region motif; sequence PYANGSLHIGH. Position 573 (glutamate 573) interacts with L-isoleucyl-5'-AMP. Positions 614–618 match the 'KMSKS' region motif; it reads KMSKS. Lysine 617 contacts ATP. 4 residues coordinate Zn(2+): cysteine 929, cysteine 932, cysteine 949, and cysteine 952.

Belongs to the class-I aminoacyl-tRNA synthetase family. IleS type 1 subfamily. Monomer. Zn(2+) serves as cofactor.

Its subcellular location is the cytoplasm. The catalysed reaction is tRNA(Ile) + L-isoleucine + ATP = L-isoleucyl-tRNA(Ile) + AMP + diphosphate. Catalyzes the attachment of isoleucine to tRNA(Ile). As IleRS can inadvertently accommodate and process structurally similar amino acids such as valine, to avoid such errors it has two additional distinct tRNA(Ile)-dependent editing activities. One activity is designated as 'pretransfer' editing and involves the hydrolysis of activated Val-AMP. The other activity is designated 'posttransfer' editing and involves deacylation of mischarged Val-tRNA(Ile). The protein is Isoleucine--tRNA ligase of Nostoc sp. (strain PCC 7120 / SAG 25.82 / UTEX 2576).